A 261-amino-acid polypeptide reads, in one-letter code: General secretion pathway protein N (261 aa).

At 1 to 10 the chain is on the cytoplasmic side; sequence MRLEMIGLRT. Residues 11 to 31 traverse the membrane as a helical segment; that stretch reads WLLATVVGWALLVCVLAVAGL. At 32-261 the chain is on the periplasmic side; that stretch reads GKRVELLPDD…QGGSTPGQTQ (230 aa). Residues 158–261 are disordered; that stretch reads VFNGQGGQPP…QGGSTPGQTQ (104 aa). A compositionally biased stretch (pro residues) spans 179 to 200; the sequence is AVPPLPPNVPPAPATPAPPPAE. Residues 201–211 show a composition bias toward low complexity; that stretch reads VPQQQPGGQAP. Basic and acidic residues predominate over residues 227–244; sequence RPSDEQMRAIRERIEARR.

In terms of assembly, binds to XpsD.

It is found in the cell inner membrane. Its function is as follows. Involved in a general secretion pathway (GSP) for the export of proteins. In Xanthomonas campestris pv. campestris (strain ATCC 33913 / DSM 3586 / NCPPB 528 / LMG 568 / P 25), this protein is General secretion pathway protein N (xpsN).